The sequence spans 441 residues: Tol-Pal system protein TolB (441 aa).

The first 25 residues, 1–25 (MRIFFFAYVLPTVISLLLGCQGAIA), serve as a signal peptide directing secretion.

Belongs to the TolB family. In terms of assembly, the Tol-Pal system is composed of five core proteins: the inner membrane proteins TolA, TolQ and TolR, the periplasmic protein TolB and the outer membrane protein Pal. They form a network linking the inner and outer membranes and the peptidoglycan layer.

It localises to the periplasm. Functionally, part of the Tol-Pal system, which plays a role in outer membrane invagination during cell division and is important for maintaining outer membrane integrity. The polypeptide is Tol-Pal system protein TolB (Anaplasma marginale (strain St. Maries)).